Consider the following 673-residue polypeptide: F-box/LRR-repeat protein 17 (673 aa).

Residues 1–39 (MGHVAPHASKKEHVAPHAAEKDHVAPHASKKEHVAPHAA) are disordered. Residues 9 to 39 (SKKEHVAPHAAEKDHVAPHASKKEHVAPHAA) show a composition bias toward basic and acidic residues. In terms of domain architecture, F-box spans 291 to 338 (PLHINQLPSSLLLKIFSNLSLNERCILASLVCKYWRDLCLDSQFWKQL).

The protein belongs to the FBXL17 family. In terms of assembly, part of the SCF (SKP1-CUL1-F-box) E3 ubiquitin-protein ligase complex SCF(FBXL17). Interacts with BTB domain-containing proteins; specifically recognizes and binds a conserved degron of non-consecutive residues present at the interface of BTB dimers of aberrant composition. As to expression, expressed in the neuro-ectoderm of embryos.

It is found in the cytoplasm. Its subcellular location is the nucleus. Substrate-recognition component of the SCF(FBXL17) E3 ubiquitin ligase complex, a key component of a quality control pathway required to ensure functional dimerization of BTB domain-containing proteins (dimerization quality control, DQC). FBXL17 specifically recognizes and binds a conserved degron of non-consecutive residues present at the interface of BTB dimers of aberrant composition: aberrant BTB dimer are then ubiquitinated by the SCF(FBXL17) complex and degraded by the proteasome. The ability of the SCF(FBXL17) complex to eliminate compromised BTB dimers is required for the differentiation and survival of neural crest and neuronal cells. In Xenopus laevis (African clawed frog), this protein is F-box/LRR-repeat protein 17.